A 333-amino-acid chain; its full sequence is Mitochondrial thiamine pyrophosphate carrier 1 (333 aa).

Solcar repeat units follow at residues 12-115 (GSRL…ITQF), 129-215 (PPSV…LRPR), and 222-318 (PYSS…ALKL). 6 helical membrane-spanning segments follow: residues 17–35 (VTAA…IAPL), 96–112 (LLYV…YRSI), 135–155 (FIAG…LDLL), 190–209 (GLGP…FCVY), 221–238 (LPYS…SVMA), and 293–310 (GLTV…VTMW).

This sequence belongs to the mitochondrial carrier (TC 2.A.29) family.

It is found in the mitochondrion inner membrane. In terms of biological role, mitochondrial transporter that mediates uptake of thiamine pyrophosphate (ThPP) into mitochondria. The protein is Mitochondrial thiamine pyrophosphate carrier 1 (tpc-1) of Neurospora crassa (strain ATCC 24698 / 74-OR23-1A / CBS 708.71 / DSM 1257 / FGSC 987).